The following is a 237-amino-acid chain: Proteasome subunit alpha type-5-A (237 aa).

Methionine 1 carries the N-acetylmethionine modification. Residues lysine 43 and lysine 66 each participate in a glycyl lysine isopeptide (Lys-Gly) (interchain with G-Cter in ubiquitin) cross-link.

It belongs to the peptidase T1A family. As to quaternary structure, component of the 20S core complex of the 26S proteasome. The 26S proteasome is composed of a core protease (CP), known as the 20S proteasome, capped at one or both ends by the 19S regulatory particle (RP/PA700). The 20S proteasome core is composed of 28 subunits that are arranged in four stacked rings, resulting in a barrel-shaped structure. The two end rings are each formed by seven alpha subunits, and the two central rings are each formed by seven beta subunits. The catalytic chamber with the active sites is on the inside of the barrel.

It localises to the cytoplasm. It is found in the nucleus. Its function is as follows. The proteasome is a multicatalytic proteinase complex which is characterized by its ability to cleave peptides with Arg, Phe, Tyr, Leu, and Glu adjacent to the leaving group at neutral or slightly basic pH. The proteasome has an ATP-dependent proteolytic activity. The polypeptide is Proteasome subunit alpha type-5-A (PAE1) (Arabidopsis thaliana (Mouse-ear cress)).